Reading from the N-terminus, the 194-residue chain is MLYFTIKNMKFRNLMKIINALREEEVVAYPTESMFGLGCDPDSISAVNKLIYLKKRKINKGFIIVAANISQLNNYIDCTSLSKNNLNKIFCTWPGFITWLMPPKKDIPCWLIGNNSLIAVRVSNFFPIKKICNIFGKPIISTSANLSGEIPAKNIKEIKHKLGSKIIILDHPIGKYSNPSEIRNGINYKIIRKG.

In terms of domain architecture, YrdC-like spans phenylalanine 11 to glycine 194.

This sequence belongs to the SUA5 family. TsaC subfamily.

It localises to the cytoplasm. It catalyses the reaction L-threonine + hydrogencarbonate + ATP = L-threonylcarbamoyladenylate + diphosphate + H2O. Functionally, required for the formation of a threonylcarbamoyl group on adenosine at position 37 (t(6)A37) in tRNAs that read codons beginning with adenine. Catalyzes the conversion of L-threonine, HCO(3)(-)/CO(2) and ATP to give threonylcarbamoyl-AMP (TC-AMP) as the acyladenylate intermediate, with the release of diphosphate. The sequence is that of Threonylcarbamoyl-AMP synthase from Wigglesworthia glossinidia brevipalpis.